A 319-amino-acid polypeptide reads, in one-letter code: Acetyl esterase (319 aa).

The Involved in the stabilization of the negatively charged intermediate by the formation of the oxyanion hole motif lies at 91–93 (HGG). Active-site residues include Ser165, Asp262, and His292.

It belongs to the 'GDXG' lipolytic enzyme family. Homodimer. Interacts with MalT and MelA.

It localises to the cytoplasm. Functionally, displays esterase activity towards short chain fatty esters (acyl chain length of up to 8 carbons). Able to hydrolyze triacetylglycerol (triacetin) and tributyrylglycerol (tributyrin), but not trioleylglycerol (triolein) or cholesterol oleate. Negatively regulates MalT activity by antagonizing maltotriose binding. Inhibits MelA galactosidase activity. This chain is Acetyl esterase, found in Escherichia coli O157:H7.